A 383-amino-acid polypeptide reads, in one-letter code: UDP-N-acetylglucosamine 2-epimerase (383 aa).

This sequence belongs to the UDP-N-acetylglucosamine 2-epimerase family.

The enzyme catalyses UDP-N-acetyl-alpha-D-glucosamine = UDP-N-acetyl-alpha-D-mannosamine. The protein operates within capsule biogenesis; capsule polysaccharide biosynthesis. In terms of biological role, non-hydrolyzing C2-epimerase involved in the biosynthesis of capsular polysaccharides. Catalyzes the C2 epimerization of UDP-N-acetylglucosamine (UDP-GlcNAc) to form UDP-N-acetylmannosamine (UDP-ManNAc). This is UDP-N-acetylglucosamine 2-epimerase from Campylobacter jejuni.